A 259-amino-acid chain; its full sequence is Probable ABC transporter arginine-binding protein ArtJ (259 aa).

Positions 1–25 are cleaved as a signal peptide; the sequence is MIKQIGRFFRAFIFIMPLSLTSCES. Asn38, Glu45, Ala96, Gly97, Ser99, Arg104, and Phe149 together coordinate L-arginine.

It belongs to the bacterial solute-binding protein 3 family.

Its subcellular location is the secreted. It is found in the cell surface. Probably part of an ABC transporter complex involved in arginine transport. Binds arginine. Interacts with host epithelial cells, suggesting a role in host-cell adhesion during infection. This Chlamydia pneumoniae (Chlamydophila pneumoniae) protein is Probable ABC transporter arginine-binding protein ArtJ.